A 271-amino-acid chain; its full sequence is Putative pyruvate, phosphate dikinase regulatory protein (271 aa).

G150–T157 is an ADP binding site.

This sequence belongs to the pyruvate, phosphate/water dikinase regulatory protein family. PDRP subfamily.

The catalysed reaction is N(tele)-phospho-L-histidyl/L-threonyl-[pyruvate, phosphate dikinase] + ADP = N(tele)-phospho-L-histidyl/O-phospho-L-threonyl-[pyruvate, phosphate dikinase] + AMP + H(+). It carries out the reaction N(tele)-phospho-L-histidyl/O-phospho-L-threonyl-[pyruvate, phosphate dikinase] + phosphate + H(+) = N(tele)-phospho-L-histidyl/L-threonyl-[pyruvate, phosphate dikinase] + diphosphate. Bifunctional serine/threonine kinase and phosphorylase involved in the regulation of the pyruvate, phosphate dikinase (PPDK) by catalyzing its phosphorylation/dephosphorylation. The polypeptide is Putative pyruvate, phosphate dikinase regulatory protein (Oceanobacillus iheyensis (strain DSM 14371 / CIP 107618 / JCM 11309 / KCTC 3954 / HTE831)).